We begin with the raw amino-acid sequence, 343 residues long: tRNA N6-adenosine threonylcarbamoyltransferase (343 aa).

The Fe cation site is built by histidine 120 and histidine 124. Substrate is bound by residues 142–146 (VVSGG), aspartate 175, glycine 188, aspartate 192, and asparagine 281. Aspartate 310 provides a ligand contact to Fe cation.

It belongs to the KAE1 / TsaD family. It depends on Fe(2+) as a cofactor.

Its subcellular location is the cytoplasm. It carries out the reaction L-threonylcarbamoyladenylate + adenosine(37) in tRNA = N(6)-L-threonylcarbamoyladenosine(37) in tRNA + AMP + H(+). Its function is as follows. Required for the formation of a threonylcarbamoyl group on adenosine at position 37 (t(6)A37) in tRNAs that read codons beginning with adenine. Is involved in the transfer of the threonylcarbamoyl moiety of threonylcarbamoyl-AMP (TC-AMP) to the N6 group of A37, together with TsaE and TsaB. TsaD likely plays a direct catalytic role in this reaction. The sequence is that of tRNA N6-adenosine threonylcarbamoyltransferase from Bacillus cereus (strain ATCC 10987 / NRS 248).